The following is a 144-amino-acid chain: Peptidyl-Asp metalloendopeptidase (144 aa).

Histidine 64 serves as a coordination point for Zn(2+). Glutamate 65 is a catalytic residue. Histidine 68 lines the Zn(2+) pocket.

The protein belongs to the peptidase M72 family. The cofactor is Zn(2+).

The catalysed reaction is Cleavage of Xaa-|-Asp, Xaa-|-Glu and Xaa-|-cysteic acid bonds.. In terms of biological role, metalloprotease, specifically cleaves on the N-terminal side of aspartyl, glutamyl and cysteic acid residues. This chain is Peptidyl-Asp metalloendopeptidase, found in Pseudomonas fragi.